The primary structure comprises 80 residues: Sulfur carrier protein TusA (80 aa).

C17 serves as the catalytic Cysteine persulfide intermediate.

This sequence belongs to the sulfur carrier protein TusA family.

Its subcellular location is the cytoplasm. Sulfur carrier protein which probably makes part of a sulfur-relay system. This is Sulfur carrier protein TusA from Pseudomonas putida (strain ATCC 47054 / DSM 6125 / CFBP 8728 / NCIMB 11950 / KT2440).